A 351-amino-acid chain; its full sequence is Replication-associated protein (351 aa).

The 109-residue stretch at 8–116 (QINAKNYFLT…DGDTWRWGTF (109 aa)) folds into the CRESS-DNA virus Rep endonuclease domain. The RCR-1 signature appears at 15–18 (FLTY). A divalent metal cation-binding residues include glutamate 49, histidine 57, and histidine 59. The short motif at 57-59 (HLH) is the RCR-2 element. Catalysis depends on tyrosine 103, which acts as the For DNA cleavage activity. An RCR-3 motif is present at residues 103 to 106 (YIDK). Residue aspartate 107 participates in a divalent metal cation binding. The interval 143–153 (KSEALKILREL) is binding to RBR1. An oligomerization region spans residues 156–176 (RDYLRDFHHISSNLDRIFTKP). ATP is bound at residue 220-227 (GDSRTGKT).

Belongs to the geminiviridae Rep protein family. As to quaternary structure, homooligomer. Interacts with the replication enhancer protein (REn). Interacts with host retinoblastoma-related protein 1 (RBR1), and may thereby induce the transcription of host replicative enzymes even if the cell is not dividing anymore. Interacts with host PCNA. Interacts with host SCE1 protein. Mg(2+) serves as cofactor. Requires Mn(2+) as cofactor.

The protein resides in the host nucleus. Essential for the replication of viral ssDNA. The closed circular ssDNA genome is first converted to a superhelical dsDNA. Rep binds a specific region at the genome origin of replication. It introduces an endonucleolytic nick within the conserved sequence 5'-TAATATTAC-3' in the intergenic region of the genome present in all geminiviruses, thereby initiating the rolling circle replication (RCR). Following cleavage, binds covalently to the 5'-phosphate of DNA as a tyrosyl ester. The cleavage gives rise to a free 3'-OH that serves as a primer for the cellular DNA polymerase. The polymerase synthesizes the (+) strand DNA by rolling circle mechanism. After one round of replication, a Rep-catalyzed nucleotidyl transfer reaction releases a circular single-stranded virus genome, thereby terminating the replication. Displays origin-specific DNA cleavage, nucleotidyl transferase, ATPase and helicase activities. The protein is Replication-associated protein of Manihot esculenta (Cassava).